The following is a 303-amino-acid chain: Lipoyl synthase (303 aa).

The [4Fe-4S] cluster site is built by Cys35, Cys40, Cys46, Cys61, Cys65, Cys68, and Ser273. Residues 47–262 (FRERQATFLI…KELAEKMGFR (216 aa)) form the Radical SAM core domain.

The protein belongs to the radical SAM superfamily. Lipoyl synthase family. It depends on [4Fe-4S] cluster as a cofactor.

It is found in the cytoplasm. The catalysed reaction is [[Fe-S] cluster scaffold protein carrying a second [4Fe-4S](2+) cluster] + N(6)-octanoyl-L-lysyl-[protein] + 2 oxidized [2Fe-2S]-[ferredoxin] + 2 S-adenosyl-L-methionine + 4 H(+) = [[Fe-S] cluster scaffold protein] + N(6)-[(R)-dihydrolipoyl]-L-lysyl-[protein] + 4 Fe(3+) + 2 hydrogen sulfide + 2 5'-deoxyadenosine + 2 L-methionine + 2 reduced [2Fe-2S]-[ferredoxin]. Its pathway is protein modification; protein lipoylation via endogenous pathway; protein N(6)-(lipoyl)lysine from octanoyl-[acyl-carrier-protein]: step 2/2. Catalyzes the radical-mediated insertion of two sulfur atoms into the C-6 and C-8 positions of the octanoyl moiety bound to the lipoyl domains of lipoate-dependent enzymes, thereby converting the octanoylated domains into lipoylated derivatives. The sequence is that of Lipoyl synthase from Geobacter sulfurreducens (strain ATCC 51573 / DSM 12127 / PCA).